A 334-amino-acid polypeptide reads, in one-letter code: Malate dehydrogenase, cytoplasmic (334 aa).

Ser2 bears the N-acetylserine mark. Residues 11-17 and Asp42 contribute to the NAD(+) site; that span reads GAAGQIA. Positions 92 and 98 each coordinate substrate. Asn105 contacts NAD(+). An N6-succinyllysine modification is found at Lys110. NAD(+) is bound at residue Gln112. 2 positions are modified to N6-acetyllysine: Lys118 and Lys121. 129–131 serves as a coordination point for NAD(+); that stretch reads VGN. Substrate is bound by residues Asn131 and Arg162. His187 acts as the Proton acceptor in catalysis. Residue Lys214 is modified to N6-succinyllysine. Position 217 is a phosphoserine (Ser217). Arg230 carries the post-translational modification Omega-N-methylarginine. At Ser241 the chain carries Phosphoserine. Lys298 carries the N6-acetyllysine; alternate modification. N6-succinyllysine; alternate is present on Lys298. Residue Ser309 is modified to Phosphoserine. Position 318 is an N6-succinyllysine (Lys318). A phosphoserine mark is found at Ser332 and Ser333.

The protein belongs to the LDH/MDH superfamily. MDH type 2 family. As to quaternary structure, homodimer. In terms of processing, ISGylated. Acetylation at Lys-118 dramatically enhances enzymatic activity and promotes adipogenic differentiation.

The protein localises to the cytoplasm. The protein resides in the cytosol. The catalysed reaction is (S)-malate + NAD(+) = oxaloacetate + NADH + H(+). The enzyme catalyses (2R)-2-hydroxy-3-(4-hydroxyphenyl)propanoate + NAD(+) = 3-(4-hydroxyphenyl)pyruvate + NADH + H(+). It carries out the reaction (S)-2-hydroxyglutarate + NAD(+) = 2-oxoglutarate + NADH + H(+). Functionally, catalyzes the reduction of aromatic alpha-keto acids in the presence of NADH. Plays essential roles in the malate-aspartate shuttle and the tricarboxylic acid cycle, important in mitochondrial NADH supply for oxidative phosphorylation. Catalyzes the reduction of 2-oxoglutarate to 2-hydroxyglutarate, leading to elevated reactive oxygen species (ROS). The chain is Malate dehydrogenase, cytoplasmic from Homo sapiens (Human).